The sequence spans 382 residues: Gap junction alpha-1 protein (382 aa).

Over 2–23 (GDWSALGKLLDKVQAYSTAGGK) the chain is Cytoplasmic. A Phosphoserine modification is found at serine 5. Residues 24–44 (VWLSVLFIFRILLLGTAVESA) traverse the membrane as a helical segment. Residues 45 to 76 (WGDEQSAFRCNTQQPGCENVCYDKSFPISHVR) lie on the Extracellular side of the membrane. 2 cysteine pairs are disulfide-bonded: cysteine 54/cysteine 192 and cysteine 187/cysteine 198. The helical transmembrane segment at 77 to 97 (FWVLQIIFVSVPTLLYLAHVF) threads the bilayer. The Cytoplasmic segment spans residues 98–155 (YVMRKEEKLNKKEEELKVAQTDGVNVEMHLKQIEIKKFKYGIEEHGKVKMRGGLLRTY). A Glycyl lysine isopeptide (Lys-Gly) (interchain with G-Cter in SUMO) cross-link involves residue lysine 144. The chain crosses the membrane as a helical span at residues 156 to 176 (IISILFKSVFEVAFLLIQWYI). Residues 177–207 (YGFSLSAVYTCKRDPCPHQVDCFLSRPTEKT) are Extracellular-facing. A helical transmembrane segment spans residues 208–228 (IFIIFMLVVSLVSLALNIIEL). Residues 229–382 (FYVFFKGVKD…SRPRPDDLEI (154 aa)) lie on the Cytoplasmic side of the membrane. Residue lysine 237 forms a Glycyl lysine isopeptide (Lys-Gly) (interchain with G-Cter in SUMO) linkage. The segment at 244-382 (SDPYHATTGP…SRPRPDDLEI (139 aa)) is interaction with NOV. A Phosphotyrosine modification is found at tyrosine 247. 3 positions are modified to phosphoserine: serine 255, serine 257, and serine 262. The interval 264 to 382 (KYAYFNGCSS…SRPRPDDLEI (119 aa)) is interaction with UBQLN4. Cysteine 271 bears the S-nitrosocysteine mark. Threonine 275 is modified (phosphothreonine). Phosphoserine occurs at positions 306, 314, and 325. Positions 317-332 (QNRMGQAGSTISNSHA) are enriched in polar residues. Residues 317 to 382 (QNRMGQAGST…SRPRPDDLEI (66 aa)) are disordered. Threonine 326 carries the post-translational modification Phosphothreonine. Residues serine 328, serine 330, and serine 365 each carry the phosphoserine modification. Over residues 362 to 374 (RPSSRASSRASSR) the composition is skewed to low complexity. The residue at position 368 (serine 368) is a Phosphoserine; by PKC/PRKCG and PKC/PRKCD. A phosphoserine mark is found at serine 369 and serine 373.

The protein belongs to the connexin family. Alpha-type (group II) subfamily. In terms of assembly, a connexon is composed of a hexamer of connexins. Interacts with SGSM3. Interacts with RIC1/CIP150. Interacts with CNST and CSNK1D. Interacts (via C-terminus) with TJP1. Interacts (via C-terminus) with SRC (via SH3 domain). Interacts (not ubiquitinated) with UBQLN4 (via UBA domain). Interacts with NOV. Interacts with TMEM65. Interacts with ANK3/ANKG and PKP2. In terms of processing, contains at least one intramolecular disulfide bond. Post-translationally, phosphorylation at Ser-325, Ser-328 and Ser-330 by CK1 modulates gap junction assembly. Phosphorylated at Ser-368 by PRKCG; phosphorylation induces disassembly of gap junction plaques and inhibition of gap junction activity. Phosphorylation at Ser-368 by PRKCD triggers its internalization into small vesicles leading to proteasome-mediated degradation. Sumoylated with SUMO1, SUMO2 and SUMO3, which may regulate the level of functional Cx43 gap junctions at the plasma membrane. May be desumoylated by SENP1 or SENP2. In terms of processing, S-nitrosylation at Cys-271 is enriched at the muscle endothelial gap junction in arteries, it augments channel permeability and may regulate of smooth muscle cell to endothelial cell communication. Post-translationally, acetylated in the developing cortex; leading to delocalization from the cell membrane. In terms of tissue distribution, detected in ventricle and atrium (at protein level).

It localises to the cell membrane. The protein localises to the cell junction. Its subcellular location is the gap junction. It is found in the endoplasmic reticulum. Its function is as follows. Gap junction protein that acts as a regulator of bladder capacity. A gap junction consists of a cluster of closely packed pairs of transmembrane channels, the connexons, through which materials of low MW diffuse from one cell to a neighboring cell. Negative regulator of bladder functional capacity: acts by enhancing intercellular electrical and chemical transmission, thus sensitizing bladder muscles to cholinergic neural stimuli and causing them to contract. May play a role in cell growth inhibition through the regulation of NOV expression and localization. Plays an essential role in gap junction communication in the ventricles. In Rattus norvegicus (Rat), this protein is Gap junction alpha-1 protein (Gja1).